Here is a 461-residue protein sequence, read N- to C-terminus: Ribitol-5-phosphate transferase FKTN (461 aa).

Residues 1 to 7 (MSRINKN) lie on the Cytoplasmic side of the membrane. Residues 6 to 27 (KNVVLALLTLTSSAFLLFQLYY) are required and sufficient for interaction with POMGNT1. The chain crosses the membrane as a helical; Signal-anchor for type II membrane protein span at residues 8–28 (VVLALLTLTSSAFLLFQLYYY). Residues 29-461 (KHYLSARNGP…SEWDEVIQLY (433 aa)) are Lumenal-facing. A glycan (N-linked (GlcNAc...) asparagine) is linked at asparagine 92.

The protein belongs to the LicD transferase family. Forms a complex composed of FKTN/fukutin, FKRP and RXYLT1/TMEM5. Interacts (via transmembrane domain) with POMGNT1; the interaction is direct and is required for normal POMGNT1 location in Golgi membranes. Expressed in the retina, with highest levels found in the inner segments of photoreceptors and the outer plexiform layer (at protein level). Expressed at lower levels in the inner and outer nuclear layers, the inner plexiform layers, and the ganglion cell layers of the retina (at protein level). Expressed in the heart, brain, spleen, lung, liver, skeletal muscle, kidney and testis.

The protein localises to the golgi apparatus membrane. It localises to the cytoplasm. It is found in the nucleus. The protein resides in the endoplasmic reticulum. The catalysed reaction is 3-O-[beta-D-GalNAc-(1-&gt;3)-beta-D-GlcNAc-(1-&gt;4)-(O-6-P-alpha-D-Man)]-Thr-[protein] + CDP-L-ribitol = 3-O-[Rib-ol-P-3-beta-D-GalNAc-(1-&gt;3)-beta-D-GlcNAc-(1-&gt;4)-(O-6-P-alpha-D-Man)]-Thr-[protein] + CMP + H(+). It participates in protein modification; protein glycosylation. In terms of biological role, catalyzes the transfer of CDP-ribitol to the distal N-acetylgalactosamine of the phosphorylated O-mannosyl trisaccharide (N-acetylgalactosamine-beta-3-N-acetylglucosamine-beta-4-(phosphate-6-)mannose), a carbohydrate structure present in alpha-dystroglycan (DAG1). This constitutes the first step in the formation of the ribitol 5-phosphate tandem repeat which links the phosphorylated O-mannosyl trisaccharide to the ligand binding moiety composed of repeats of 3-xylosyl-alpha-1,3-glucuronic acid-beta-1. Required for normal location of POMGNT1 in Golgi membranes, and for normal POMGNT1 activity. May interact with and reinforce a large complex encompassing the outside and inside of muscle membranes. Could be involved in brain development. The polypeptide is Ribitol-5-phosphate transferase FKTN (Mus musculus (Mouse)).